The sequence spans 333 residues: Ribosomal RNA small subunit methyltransferase C (333 aa).

Belongs to the methyltransferase superfamily. RsmC family. As to quaternary structure, monomer.

The protein resides in the cytoplasm. The enzyme catalyses guanosine(1207) in 16S rRNA + S-adenosyl-L-methionine = N(2)-methylguanosine(1207) in 16S rRNA + S-adenosyl-L-homocysteine + H(+). In terms of biological role, specifically methylates the guanine in position 1207 of 16S rRNA in the 30S particle. In Chromohalobacter salexigens (strain ATCC BAA-138 / DSM 3043 / CIP 106854 / NCIMB 13768 / 1H11), this protein is Ribosomal RNA small subunit methyltransferase C.